Consider the following 244-residue polypeptide: Probable phosphatase CA_C0509 (244 aa).

H8, H10, H16, H41, E74, H102, H132, D193, and H195 together coordinate Zn(2+).

It belongs to the PHP family. Requires Zn(2+) as cofactor.

The chain is Probable phosphatase CA_C0509 from Clostridium acetobutylicum (strain ATCC 824 / DSM 792 / JCM 1419 / IAM 19013 / LMG 5710 / NBRC 13948 / NRRL B-527 / VKM B-1787 / 2291 / W).